The chain runs to 605 residues: Zinc metalloproteinase-disintegrin-like BfMP (605 aa).

Positions 1–11 are cleaved as a signal peptide; that stretch reads MLVVFPYQGSS. Residues 12–179 constitute a propeptide that is removed on maturation; sequence IILESGNVND…WESDEPFKNT (168 aa). N-linked (GlcNAc...) asparagine glycosylation is found at N178 and N215. Residues 196–392 form the Peptidase M12B domain; the sequence is KYIEFYVAVD…DRPQCILNKP (197 aa). Disulfide bonds link C307–C387, C347–C371, C350–C355, C403–C432, C414–C427, C416–C422, C426–C449, C440–C446, C445–C471, C458–C478, C465–C497, C490–C502, C509–C559, C524–C567, C537–C547, C554–C593, and C587–C598. A Zn(2+)-binding site is contributed by H332. Residue E333 is part of the active site. 2 residues coordinate Zn(2+): H336 and H342. Positions 400-486 constitute a Disintegrin domain; the sequence is PAICGNYFVE…ECPTDIFRRN (87 aa). The D/ECD-tripeptide signature appears at 464 to 466; the sequence is DCD.

It belongs to the venom metalloproteinase (M12B) family. P-III subfamily. P-IIIa sub-subfamily. Monomer. The cofactor is Zn(2+). As to expression, expressed by the venom gland.

The protein resides in the secreted. Snake venom zinc metalloproteinase that inhibits platelet aggregation and degrades fibrinogen. The protein is Zinc metalloproteinase-disintegrin-like BfMP of Bungarus fasciatus (Banded krait).